Reading from the N-terminus, the 1076-residue chain is Nuclear factor of activated T-cells, cytoplasmic 3 (1076 aa).

The residue at position 2 (T2) is an N-acetylthreonine. A calcineurin-binding region spans residues 110–115 (PSIQIT). The disordered stretch occupies residues 206-307 (LGSPLTSPGG…PGHSPRGSVT (102 aa)). 2 tandem repeats follow at residues 208–224 (SPLT…PGEE) and 237–253 (SPRQ…ITDE). A 3 X SP repeats region spans residues 208–309 (SPLTSPGGSP…HSPRGSVTED (102 aa)). The span at 237 to 254 (SPRQSPCHSPRSSITDEN) shows a compositional bias: polar residues. Residues 257–271 (SPRPASGPSSRPTSP) show a composition bias toward low complexity. Residues 274–276 (KRR) carry the Nuclear localization signal motif. Repeat 3 spans residues 293-309 (SPVPSPGHSPRGSVTED). S345 is subject to Phosphoserine. Residues 359–390 (CSDDQGSLSPSRETSVDDGLGSQYPLKKDSSG) form a disordered region. Over residues 362 to 371 (DQGSLSPSRE) the composition is skewed to polar residues. Phosphoserine is present on S373. Residues 416–597 (SSLPPLDWPL…IPVECSQRSA (182 aa)) enclose the RHD domain. Residues 445 to 452 (RAHYETEG) mediate DNA binding. Residues 687–689 (KRK) carry the Nuclear localization signal motif. Disordered stretches follow at residues 700–744 (PVLM…ALSA) and 863–987 (GHLL…GGLS). Residues 713–722 (LSSVPSLPVP) are compositionally biased toward low complexity. Composition is skewed to polar residues over residues 724 to 734 (SAQTQRPSSDT) and 888 to 911 (SAGQ…SHLQ). Low complexity-rich tracts occupy residues 917–939 (PSHP…SSPI) and 946–965 (QLQS…SPSP). The segment covering 970 to 981 (HSGQHSTQAQST) has biased composition (polar residues). The short motif at 1032–1041 (TLDDVNEIIG) is the Nuclear export signal element. The disordered stretch occupies residues 1049–1076 (VSQGPEVIRDAPLPGPESPDVMSSNSAQ). S1066 carries the post-translational modification Phosphoserine.

NFATC proteins bind to DNA as monomers. Member of the multicomponent NFATC transcription complex that consists of at least two components, a pre-existing cytoplasmic component NFATC2 and an inducible nuclear component NFATC1. Other members such as NFATC4, or members of the activating protein-1 family, MAF, GATA4 and Cbp/p300 can also bind the complex. Component of a promoter-binding complex composed of STAT3, NFATC3 and NFATC4; complex formation is enhanced by calcineurin. Interacts with TRIM17; this interaction prevents NFATC3 nuclear localization. Interacts with and ubiquitinated by STUB1/CHIP; HSPA1A/HSP70 is required as a co-chaperone. Phosphorylated by NFATC-kinase; dephosphorylated by calcineurin. In terms of processing, ubiquitinated by STUB1/CHIP, leading to proteasomal degradation. In terms of tissue distribution, expressed in cardiomyocytes (at protein level).

It is found in the cytoplasm. The protein localises to the nucleus. Functionally, acts as a regulator of transcriptional activation. Binds to the TNFSF11/RANKL promoter region and promotes TNFSF11 transcription. Binding to the TNFSF11 promoter region is increased by high levels of Ca(2+) which induce NFATC3 expression and may lead to regulation of TNFSF11 expression in osteoblasts. Plays a role in promoting mesenteric arterial wall remodeling in response to the intermittent hypoxia-induced increase in EDN1 and ROCK signaling. As a result NFATC3 colocalizes with F-actin filaments, translocates to the nucleus and promotes transcription of the smooth muscle hypertrophy and differentiation marker ACTA2. Promotes lipopolysaccharide-induced apoptosis and hypertrophy in cardiomyocytes. Following JAK/STAT signaling activation and as part of a complex with NFATC4 and STAT3, binds to the alpha-beta E4 promoter region of CRYAB and activates transcription in cardiomyocytes. In conjunction with NFATC4, involved in embryonic heart development via maintenance of cardiomyocyte survival, proliferation and differentiation. Plays a role in the inducible expression of cytokine genes in T-cells, especially in the induction of the IL-2. Required for thymocyte maturation during DN3 to DN4 transition and during positive selection. Positively regulates macrophage-derived polymicrobial clearance, via binding to the promoter region and promoting transcription of NOS2 resulting in subsequent generation of nitric oxide. Involved in Ca(2+)-mediated transcriptional responses upon Ca(2+) influx via ORAI1 CRAC channels. The chain is Nuclear factor of activated T-cells, cytoplasmic 3 from Rattus norvegicus (Rat).